We begin with the raw amino-acid sequence, 466 residues long: Trigger factor (466 aa).

Positions 162–243 constitute a PPIase FKBP-type domain; the sequence is GDVVSIDLSA…VRSVKERELP (82 aa). The interval 428–466 is disordered; sequence GNTIDTSEFFGKRVSAGEAEEAEPADEGAARAASDEATT. The segment covering 457–466 has biased composition (low complexity); it reads ARAASDEATT.

This sequence belongs to the FKBP-type PPIase family. Tig subfamily.

The protein resides in the cytoplasm. It catalyses the reaction [protein]-peptidylproline (omega=180) = [protein]-peptidylproline (omega=0). In terms of biological role, involved in protein export. Acts as a chaperone by maintaining the newly synthesized protein in an open conformation. Functions as a peptidyl-prolyl cis-trans isomerase. This Mycobacterium bovis (strain BCG / Tokyo 172 / ATCC 35737 / TMC 1019) protein is Trigger factor.